Reading from the N-terminus, the 142-residue chain is Transcriptional regulator MraZ (142 aa).

2 consecutive SpoVT-AbrB domains span residues 5–51 (ASSL…PRPE) and 77–120 (AMDV…DKAT).

The protein belongs to the MraZ family. As to quaternary structure, forms oligomers.

It localises to the cytoplasm. The protein localises to the nucleoid. This Acidovorax ebreus (strain TPSY) (Diaphorobacter sp. (strain TPSY)) protein is Transcriptional regulator MraZ.